A 253-amino-acid chain; its full sequence is MDQPGDTTHFGFRDVPLGDKQTLVNGVFHNVAQRYDLMNDLMSAGLHRVWKDATITALNPPRNDTPFALLDVAGGTGDIAFRAAKAAGLGFRATVCDINPDMLAVGHERAIKQHLDHQVSFVEGNAETLAFADRSFDAYTIAFGIRNVPRIDSALREAFRVLKPGGRFLCLEFSTVDVPGLDKIYDLFSFKVIPPLGRAVTGDADSYQYLVESIRKFPKPNAFADMIRDAGFARVTWQVLSGGIVALHSGWRL.

S-adenosyl-L-methionine contacts are provided by residues threonine 76, aspartate 97, and 125–126; that span reads NA.

This sequence belongs to the class I-like SAM-binding methyltransferase superfamily. MenG/UbiE family.

It catalyses the reaction a 2-demethylmenaquinol + S-adenosyl-L-methionine = a menaquinol + S-adenosyl-L-homocysteine + H(+). The enzyme catalyses a 2-methoxy-6-(all-trans-polyprenyl)benzene-1,4-diol + S-adenosyl-L-methionine = a 5-methoxy-2-methyl-3-(all-trans-polyprenyl)benzene-1,4-diol + S-adenosyl-L-homocysteine + H(+). Its pathway is quinol/quinone metabolism; menaquinone biosynthesis; menaquinol from 1,4-dihydroxy-2-naphthoate: step 2/2. It functions in the pathway cofactor biosynthesis; ubiquinone biosynthesis. Functionally, methyltransferase required for the conversion of demethylmenaquinol (DMKH2) to menaquinol (MKH2) and the conversion of 2-polyprenyl-6-methoxy-1,4-benzoquinol (DDMQH2) to 2-polyprenyl-3-methyl-6-methoxy-1,4-benzoquinol (DMQH2). This is Ubiquinone/menaquinone biosynthesis C-methyltransferase UbiE from Nitrobacter hamburgensis (strain DSM 10229 / NCIMB 13809 / X14).